The sequence spans 227 residues: MMVAHTAQQLDLREKLLTNGVHSLSDIELLAVFISSGNNKKSCLQLAYELTKHLGNLRNILNADLQSFKSIHGLGEVRYAQLQAAKEICHRSDFIDLQKEIQLSNTQQTYAFLKKRLRDYKNETFAALFLDSQHRIIAYEELFSGTINTATVYPRPIVERVLQLNAAALILAHNHPSGLSDASQQDFAITERIRDALDLVDARLLDHIVIGDNEVYSIFAENKWVCN.

Residues 102 to 225 (QLSNTQQTYA…YSIFAENKWV (124 aa)) form the MPN domain. Zn(2+)-binding residues include His-173, His-175, and Asp-186. Residues 173 to 186 (HNHPSGLSDASQQD) carry the JAMM motif motif.

This sequence belongs to the UPF0758 family.

In Legionella pneumophila (strain Corby), this protein is UPF0758 protein LPC_1989.